Here is a 352-residue protein sequence, read N- to C-terminus: MAGTICFIMWVLFITDTVWSRSVRQVYEVHDSDDWTIHDFECPMECFCPPSFPTALYCENRGLKEIPAIPSRIWYLYLQNNLIETIPEKPFENATQLRWINLNKNKITNYGIEKGALSQLKKLLFLFLEDNELEEVPSPLPRSLEQLQLARNKVSRIPQGTFSNLENLTLLDLQNNKLVDNAFQRDTFKGLKNLMQLNMAKNALRNMPPRLPANTMQLFLDNNSIEGIPENYFNVIPKVAFLRLNHNKLSDEGLPSRGFDVSSILDLQLSHNQLTKVPRISAHLQHLHLDHNKIKSVNVSVICPSPSMLPAERDSFSYGPHLRYLRLDGNEIKPPIPMALMTCFRLLQAVII.

The N-terminal stretch at 1-20 (MAGTICFIMWVLFITDTVWS) is a signal peptide. The LRRNT domain maps to 33-71 (DDWTIHDFECPMECFCPPSFPTALYCENRGLKEIPAIPS). Disulfide bonds link cysteine 42–cysteine 48 and cysteine 46–cysteine 58. LRR repeat units lie at residues 72-93 (RIWY…PFEN), 96-117 (QLRW…KGAL), 122-142 (KLLF…PLPR), 143-164 (SLEQ…TFSN), 167-180 (NLTL…KLVD), 193-213 (NLMQ…RLPA), 214-235 (NTMQ…YFNV), 238-258 (KVAF…PSRG), 263-282 (SILD…RISA), and 283-304 (HLQH…VICP). N-linked (GlcNAc...) (keratan sulfate) asparagine glycosylation is present at asparagine 93. Asparagine 167 carries an N-linked (GlcNAc...) (keratan sulfate) asparagine glycan. An N-linked (GlcNAc...) asparagine glycan is attached at asparagine 222. A glycan (N-linked (GlcNAc...) asparagine) is linked at asparagine 298. A disulfide bridge links cysteine 303 with cysteine 343.

The protein belongs to the small leucine-rich proteoglycan (SLRP) family. SLRP class II subfamily. Post-translationally, binds keratan sulfate chains. Cornea (at protein level). Increased expression in the stroma of keratoconus corneas. Also detected in trachea, and in low levels, in intestine, skeletal muscle, ovary, lung and putamen.

The protein resides in the secreted. It localises to the extracellular space. Its subcellular location is the extracellular matrix. Its function is as follows. May be important in developing and maintaining corneal transparency and for the structure of the stromal matrix. The polypeptide is Keratocan (KERA) (Homo sapiens (Human)).